Consider the following 349-residue polypeptide: RING-H2 finger protein ATL48 (349 aa).

The 85-residue stretch at M1–S85 folds into the HIG1 domain. At S2 the chain carries N-acetylserine. 3 helical membrane-spanning segments follow: residues P21 to F41, A55 to G75, and C121 to F141. The RING-type; atypical zinc-finger motif lies at C207–R249.

It belongs to the RING-type zinc finger family. ATL subfamily.

It localises to the membrane. It catalyses the reaction S-ubiquitinyl-[E2 ubiquitin-conjugating enzyme]-L-cysteine + [acceptor protein]-L-lysine = [E2 ubiquitin-conjugating enzyme]-L-cysteine + N(6)-ubiquitinyl-[acceptor protein]-L-lysine.. Its pathway is protein modification; protein ubiquitination. The chain is RING-H2 finger protein ATL48 (ATL48) from Arabidopsis thaliana (Mouse-ear cress).